A 101-amino-acid chain; its full sequence is uncharacterized protein (101 aa).

Residues Leu68 to Ile90 form a helical membrane-spanning segment.

The protein localises to the membrane. This is an uncharacterized protein from Saccharomyces cerevisiae (strain ATCC 204508 / S288c) (Baker's yeast).